Consider the following 380-residue polypeptide: Beta sliding clamp (380 aa).

The protein belongs to the beta sliding clamp family. In terms of assembly, forms a ring-shaped head-to-tail homodimer around DNA which binds and tethers DNA polymerases and other proteins to the DNA. The DNA replisome complex has a single clamp-loading complex (3 tau and 1 each of delta, delta', psi and chi subunits) which binds 3 Pol III cores (1 core on the leading strand and 2 on the lagging strand) each with a beta sliding clamp dimer. Additional proteins in the replisome are other copies of gamma, psi and chi, Ssb, DNA helicase and RNA primase.

It is found in the cytoplasm. Confers DNA tethering and processivity to DNA polymerases and other proteins. Acts as a clamp, forming a ring around DNA (a reaction catalyzed by the clamp-loading complex) which diffuses in an ATP-independent manner freely and bidirectionally along dsDNA. Initially characterized for its ability to contact the catalytic subunit of DNA polymerase III (Pol III), a complex, multichain enzyme responsible for most of the replicative synthesis in bacteria; Pol III exhibits 3'-5' exonuclease proofreading activity. The beta chain is required for initiation of replication as well as for processivity of DNA replication. The chain is Beta sliding clamp (dnaN) from Halalkalibacterium halodurans (strain ATCC BAA-125 / DSM 18197 / FERM 7344 / JCM 9153 / C-125) (Bacillus halodurans).